A 779-amino-acid chain; its full sequence is Phosphoribosylformylglycinamidine synthase subunit PurL (779 aa).

Residue His52 is part of the active site. The ATP site is built by Tyr55 and Lys94. Glu96 serves as a coordination point for Mg(2+). Substrate contacts are provided by residues 97–100 and Arg119; that span reads SHNH. His98 serves as the catalytic Proton acceptor. Asp120 lines the Mg(2+) pocket. Gln243 is a binding site for substrate. Mg(2+) is bound at residue Asp271. Position 315-317 (315-317) interacts with substrate; sequence ESQ. 2 residues coordinate ATP: Asn523 and Gly560. Asn561 serves as a coordination point for Mg(2+). Ser563 contacts substrate.

It belongs to the FGAMS family. Monomer. Part of the FGAM synthase complex composed of 1 PurL, 1 PurQ and 2 PurS subunits.

The protein localises to the cytoplasm. It catalyses the reaction N(2)-formyl-N(1)-(5-phospho-beta-D-ribosyl)glycinamide + L-glutamine + ATP + H2O = 2-formamido-N(1)-(5-O-phospho-beta-D-ribosyl)acetamidine + L-glutamate + ADP + phosphate + H(+). The protein operates within purine metabolism; IMP biosynthesis via de novo pathway; 5-amino-1-(5-phospho-D-ribosyl)imidazole from N(2)-formyl-N(1)-(5-phospho-D-ribosyl)glycinamide: step 1/2. In terms of biological role, part of the phosphoribosylformylglycinamidine synthase complex involved in the purines biosynthetic pathway. Catalyzes the ATP-dependent conversion of formylglycinamide ribonucleotide (FGAR) and glutamine to yield formylglycinamidine ribonucleotide (FGAM) and glutamate. The FGAM synthase complex is composed of three subunits. PurQ produces an ammonia molecule by converting glutamine to glutamate. PurL transfers the ammonia molecule to FGAR to form FGAM in an ATP-dependent manner. PurS interacts with PurQ and PurL and is thought to assist in the transfer of the ammonia molecule from PurQ to PurL. The polypeptide is Phosphoribosylformylglycinamidine synthase subunit PurL (Prochlorococcus marinus (strain MIT 9301)).